A 176-amino-acid polypeptide reads, in one-letter code: Large ribosomal subunit protein uL6 (176 aa).

Belongs to the universal ribosomal protein uL6 family. As to quaternary structure, part of the 50S ribosomal subunit.

Functionally, this protein binds to the 23S rRNA, and is important in its secondary structure. It is located near the subunit interface in the base of the L7/L12 stalk, and near the tRNA binding site of the peptidyltransferase center. This Lactobacillus gasseri (strain ATCC 33323 / DSM 20243 / BCRC 14619 / CIP 102991 / JCM 1131 / KCTC 3163 / NCIMB 11718 / NCTC 13722 / AM63) protein is Large ribosomal subunit protein uL6.